Reading from the N-terminus, the 330-residue chain is Ketol-acid reductoisomerase (NADP(+)) (330 aa).

The KARI N-terminal Rossmann domain occupies 1–181 (MNVYYEQDAD…GGTKAGVIET (181 aa)). NADP(+) is bound by residues 24 to 27 (YGSQ), R47, S50, S52, and 82 to 85 (DQTQ). H107 is an active-site residue. NADP(+) is bound at residue G133. A KARI C-terminal knotted domain is found at 182-327 (NFKDETETDL…AKLRNMMSWL (146 aa)). D190, E194, E226, and E230 together coordinate Mg(2+). S251 lines the substrate pocket.

It belongs to the ketol-acid reductoisomerase family. The cofactor is Mg(2+).

It carries out the reaction (2R)-2,3-dihydroxy-3-methylbutanoate + NADP(+) = (2S)-2-acetolactate + NADPH + H(+). The catalysed reaction is (2R,3R)-2,3-dihydroxy-3-methylpentanoate + NADP(+) = (S)-2-ethyl-2-hydroxy-3-oxobutanoate + NADPH + H(+). It functions in the pathway amino-acid biosynthesis; L-isoleucine biosynthesis; L-isoleucine from 2-oxobutanoate: step 2/4. Its pathway is amino-acid biosynthesis; L-valine biosynthesis; L-valine from pyruvate: step 2/4. Functionally, involved in the biosynthesis of branched-chain amino acids (BCAA). Catalyzes an alkyl-migration followed by a ketol-acid reduction of (S)-2-acetolactate (S2AL) to yield (R)-2,3-dihydroxy-isovalerate. In the isomerase reaction, S2AL is rearranged via a Mg-dependent methyl migration to produce 3-hydroxy-3-methyl-2-ketobutyrate (HMKB). In the reductase reaction, this 2-ketoacid undergoes a metal-dependent reduction by NADPH to yield (R)-2,3-dihydroxy-isovalerate. The sequence is that of Ketol-acid reductoisomerase (NADP(+)) from Chlorobium luteolum (strain DSM 273 / BCRC 81028 / 2530) (Pelodictyon luteolum).